Here is a 316-residue protein sequence, read N- to C-terminus: Olfactory receptor 2AG1 (316 aa).

Residues 1-25 (MELWNFTLGSGFILVGILNDSGSPE) are Extracellular-facing. N-linked (GlcNAc...) asparagine glycosylation is found at asparagine 5 and asparagine 19. The chain crosses the membrane as a helical span at residues 26 to 49 (LLCATITILYLLALISNGLLLLAI). At 50 to 57 (TMEARLHM) the chain is on the cytoplasmic side. A helical transmembrane segment spans residues 58-79 (PMYLLLGQLSLMDLLFTSVVTP). The Extracellular portion of the chain corresponds to 80-100 (KALADFLRRENTISFGGCALQ). The cysteines at positions 97 and 189 are disulfide-linked. A helical transmembrane segment spans residues 101-120 (MFLALTMGGAEDLLLAFMAY). Over 121-139 (DRYVAICHPLTYMTLMSSR) the chain is Cytoplasmic. Residues 140–158 (ACWLMVATSWILASLSALI) traverse the membrane as a helical segment. Topologically, residues 159-195 (YTVYTMHYPFCRAQEIRHLLCEIPHLLKVACADTSRY) are extracellular. A helical membrane pass occupies residues 196–219 (ELMVYVMGVTFLIPSLAAILASYT). Over 220-236 (QILLTVLHMPSNEGRKK) the chain is Cytoplasmic. Residues 237–259 (ALVTCSSHLTVVGMFYGAATFMY) traverse the membrane as a helical segment. Residues 260 to 272 (VLPSSFHSTRQDN) lie on the Extracellular side of the membrane. The chain crosses the membrane as a helical span at residues 273–292 (IISVFYTIVTPALNPLIYSL). Over 293–316 (RNKEVMRALRRVLGKYMLPAHSTL) the chain is Cytoplasmic.

This sequence belongs to the G-protein coupled receptor 1 family.

The protein localises to the cell membrane. Odorant receptor. In Homo sapiens (Human), this protein is Olfactory receptor 2AG1 (OR2AG1).